Consider the following 718-residue polypeptide: Neutral ceramidase B (718 aa).

The N-terminal stretch at 1–20 (MINSFKKLIILISLVIILLS) is a signal peptide. N224 and N252 each carry an N-linked (GlcNAc...) asparagine glycan. S298 (nucleophile) is an active-site residue. N358, N378, N391, N421, N422, N577, N610, and N614 each carry an N-linked (GlcNAc...) asparagine glycan.

Belongs to the neutral ceramidase family.

It is found in the secreted. It catalyses the reaction an N-acylsphing-4-enine + H2O = sphing-4-enine + a fatty acid. In terms of biological role, hydrolyzes the sphingolipid ceramide into sphingosine and free fatty acid. This chain is Neutral ceramidase B (dcd2B), found in Dictyostelium discoideum (Social amoeba).